Here is a 163-residue protein sequence, read N- to C-terminus: Protein-export protein SecB (163 aa).

The protein belongs to the SecB family. In terms of assembly, homotetramer, a dimer of dimers. One homotetramer interacts with 1 SecA dimer.

The protein resides in the cytoplasm. In terms of biological role, one of the proteins required for the normal export of preproteins out of the cell cytoplasm. It is a molecular chaperone that binds to a subset of precursor proteins, maintaining them in a translocation-competent state. It also specifically binds to its receptor SecA. This is Protein-export protein SecB from Methylibium petroleiphilum (strain ATCC BAA-1232 / LMG 22953 / PM1).